We begin with the raw amino-acid sequence, 136 residues long: ATP synthase epsilon chain (136 aa).

It belongs to the ATPase epsilon chain family. In terms of assembly, F-type ATPases have 2 components, CF(1) - the catalytic core - and CF(0) - the membrane proton channel. CF(1) has five subunits: alpha(3), beta(3), gamma(1), delta(1), epsilon(1). CF(0) has three main subunits: a, b and c.

Its subcellular location is the cell membrane. Functionally, produces ATP from ADP in the presence of a proton gradient across the membrane. The protein is ATP synthase epsilon chain of Macrococcus caseolyticus (strain JCSC5402) (Macrococcoides caseolyticum).